The primary structure comprises 351 residues: Putative aminodehydroquinate synthase (351 aa).

NAD(+)-binding positions include 65 to 68, 97 to 101, 121 to 122, lysine 134, lysine 143, and 161 to 164; these read EPTK, GTTTD, TS, and YLTT. Zn(2+) contacts are provided by glutamate 176, histidine 225, and histidine 241.

This sequence belongs to the sugar phosphate cyclases superfamily. aDHQS family. Requires NAD(+) as cofactor. Co(2+) serves as cofactor. The cofactor is Zn(2+).

Functionally, may catalyze the conversion of 3,4-dideoxy-4-amino-D-arabino-heptulosonate 7-phosphate (aDAHP) to 5-deoxy-5-amino-3-dehydroquinate (aDHQ). Probably involved in the formation of 3-amino-5-hydroxybenzoic acid (AHBA), the precursor of rifamycin and related ansamycins. This is Putative aminodehydroquinate synthase from Amycolatopsis mediterranei (strain S699) (Nocardia mediterranei).